The chain runs to 370 residues: S-adenosylmethionine:tRNA ribosyltransferase-isomerase (370 aa).

It belongs to the QueA family. In terms of assembly, monomer.

It localises to the cytoplasm. It catalyses the reaction 7-aminomethyl-7-carbaguanosine(34) in tRNA + S-adenosyl-L-methionine = epoxyqueuosine(34) in tRNA + adenine + L-methionine + 2 H(+). It participates in tRNA modification; tRNA-queuosine biosynthesis. Its function is as follows. Transfers and isomerizes the ribose moiety from AdoMet to the 7-aminomethyl group of 7-deazaguanine (preQ1-tRNA) to give epoxyqueuosine (oQ-tRNA). The sequence is that of S-adenosylmethionine:tRNA ribosyltransferase-isomerase from Synechococcus sp. (strain WH7803).